A 227-amino-acid chain; its full sequence is Orotidine 5'-phosphate decarboxylase (227 aa).

Substrate contacts are provided by residues Asp-8, Lys-30, 57-66, Thr-116, Arg-177, Gln-186, Gly-206, and Arg-207; that span reads DLKFHDIPNT. Lys-59 (proton donor) is an active-site residue.

This sequence belongs to the OMP decarboxylase family. Type 1 subfamily. In terms of assembly, homodimer.

It catalyses the reaction orotidine 5'-phosphate + H(+) = UMP + CO2. It participates in pyrimidine metabolism; UMP biosynthesis via de novo pathway; UMP from orotate: step 2/2. Functionally, catalyzes the decarboxylation of orotidine 5'-monophosphate (OMP) to uridine 5'-monophosphate (UMP). The sequence is that of Orotidine 5'-phosphate decarboxylase from Acinetobacter baylyi (strain ATCC 33305 / BD413 / ADP1).